A 209-amino-acid polypeptide reads, in one-letter code: Homeobox protein ceh-2 (209 aa).

The span at Met1–Glu14 shows a compositional bias: basic and acidic residues. Disordered stretches follow at residues Met1 to Lys46 and His181 to Ser209. Positions Lys15–Glu24 are enriched in acidic residues. Positions Asn126–Arg185 form a DNA-binding region, homeobox.

Belongs to the EMX homeobox family. In the anterior pharynx, expressed in the I3 interneuron, the NSM and M3 motor neuron pairs, the three m2 muscle cells and the three e2 epithelial cells (at protein level).

It localises to the nucleus. Functionally, required for activity of the M3 pharyngeal motor neuron. The sequence is that of Homeobox protein ceh-2 from Caenorhabditis elegans.